The primary structure comprises 149 residues: Acyl carrier protein 1, chloroplastic (149 aa).

A chloroplast-targeting transit peptide spans Met1–Cys59. The region spanning Lys69–Val144 is the Carrier domain. An O-(pantetheine 4'-phosphoryl)serine modification is found at Ser104.

The protein belongs to the acyl carrier protein (ACP) family. 4'-phosphopantetheine is transferred from CoA to a specific serine of apo-ACP by acpS. This modification is essential for activity because fatty acids are bound in thioester linkage to the sulfhydryl of the prosthetic group.

The protein resides in the plastid. It is found in the chloroplast. The protein operates within lipid metabolism; fatty acid biosynthesis. Its function is as follows. Carrier of the growing fatty acid chain in fatty acid biosynthesis. This Hordeum vulgare (Barley) protein is Acyl carrier protein 1, chloroplastic (ACL1.1).